Consider the following 160-residue polypeptide: Secreted RxLR effector protein RXLR-C11 (160 aa).

Positions methionine 1–alanine 19 are cleaved as a signal peptide. The RxLR-dEER signature appears at arginine 58 to arginine 75.

Belongs to the RxLR effector family.

It is found in the secreted. The protein localises to the host cell membrane. The protein resides in the host nucleus. Its function is as follows. Secreted effector that suppresses pattern-triggered immunity (PTI) in plant host. This chain is Secreted RxLR effector protein RXLR-C11, found in Plasmopara halstedii (Downy mildew of sunflower).